The sequence spans 57 residues: uncharacterized protein (57 aa).

A helical transmembrane segment spans residues 34–54 (AALLDAAALVVIPGLLTVAAV).

The protein resides in the membrane. This is an uncharacterized protein from Dictyostelium discoideum (Social amoeba).